The sequence spans 727 residues: Cyclin-T1 (727 aa).

Serine 117 is subject to Phosphoserine. The Nuclear localization signal, and interaction with Tat-TAR RNA signature appears at 253 to 270; it reads KRIRNWRACQAAKKTKAD. Residues 302-322 show a composition bias toward low complexity; sequence MSTSSTTSTVPSLPTTEESSS. Residues 302 to 326 form a disordered region; that stretch reads MSTSSTTSTVPSLPTTEESSSNLSG. Residue lysine 343 forms a Glycyl lysine isopeptide (Lys-Gly) (interchain with G-Cter in SUMO2) linkage. Positions 386–427 form a coiled coil; it reads SAKVSLKEYRAKHAEELAAQKRQLENMEANVKSQYAYAAQNL. Residue serine 390 is modified to Phosphoserine. An N6-acetyllysine modification is found at lysine 392. A Glycyl lysine isopeptide (Lys-Gly) (interchain with G-Cter in SUMO2) cross-link involves residue lysine 417. ADP-ribosylserine occurs at positions 418, 476, and 477. The tract at residues 482–552 is histidine-rich domain (HRD); the sequence is IKMRIKVHAA…RPGDPKHSSQ (71 aa). Lysine 483 is covalently cross-linked (Glycyl lysine isopeptide (Lys-Gly) (interchain with G-Cter in SUMO2)). Basic and acidic residues predominate over residues 486 to 508; sequence IKVHAAPDKHNSIDDSVTKSREH. 2 disordered regions span residues 486–591 and 692–727; these read IKVH…DHPA and LNPRAGGMPSRSGNTDKPRLPPLPSEPPPPLPPLPK. Lysine 487 is modified (N6-(ADP-ribosyl)lysine). At histidine 489 the chain carries ADP-ribosylhistidine. Phosphoserine occurs at positions 497 and 501. The segment covering 509–532 has biased composition (basic residues); it reads KEKHKTHPSNHHHHHNHHSHKHSH. An ADP-ribosylhistidine modification is found at histidine 532. An ADP-ribosylserine mark is found at serine 533, serine 551, and serine 554. Histidine 558 bears the ADP-ribosylhistidine mark. The span at 562 to 572 shows a compositional bias: low complexity; sequence SLSSSFSSSSS. Serine 565 bears the ADP-ribosylserine mark. Residue serine 566 is modified to Phosphoserine. Positions 711–727 are enriched in pro residues; sequence LPPLPSEPPPPLPPLPK.

The protein belongs to the cyclin family. Cyclin C subfamily. Cyclin-T1 is the predominant cyclin that associates with CDK9 to form a heterodimer called P-TEFb. P-TEFb forms a complex with AFF4/AF5Q31. Component of a complex which is at least composed of HTATSF1/Tat-SF1, P-TEFb complex, RNA pol II, SUPT5H, and NCL/nucleolin. Component of the 7SK snRNP complex at least composed of P-TEFb (composed of CDK9 and CCNT1/cyclin-T1), HEXIM1, HEXIM2, BCDIN3, SART3 proteins and 7SK and U6 snRNAs. Interacts (via central region) with ZMYND8 (via N-terminus); the interaction is direct and the association appears to occur between homodimeric ZMYND8 and the activated form of the P-TEFb complex. Interacts with BRD4, targets chromatin binding. Interacts with JMJD6. Interacts with MDFIC. Interacts with HSF1. Interacts with HTATSF1. Interacts with TBX21. Post-translationally, ADP-ribosylation on serine residues by PARP1 in response to DNA damage disrupts the phase separation activity of CCNT1, thereby preventing activation of CDK9.

The protein resides in the nucleus. In terms of biological role, regulatory subunit of the cyclin-dependent kinase pair (CDK9/cyclin-T1) complex, also called positive transcription elongation factor B (P-TEFb), which facilitates the transition from abortive to productive elongation by phosphorylating the CTD (C-terminal domain) of the large subunit of RNA polymerase II (RNA Pol II). Required to activate the protein kinase activity of CDK9: acts by mediating formation of liquid-liquid phase separation (LLPS) that enhances binding of P-TEFb to the CTD of RNA Pol II. In Equus caballus (Horse), this protein is Cyclin-T1 (CCNT1).